A 235-amino-acid polypeptide reads, in one-letter code: TIR domain-containing adapter molecule 2 (235 aa).

Positions 1 to 39 (MGIGKSKINSCPLSLSWGKRHSVDTSPGYHESDSKKSED) are disordered. Glycine 2 carries the N-myristoyl glycine lipid modification. Serine 16 carries the phosphoserine; by PKC/PRKCE modification. The segment covering 30–39 (HESDSKKSED) has biased composition (basic and acidic residues). The TIR domain occupies 73 to 229 (AEEEVFLKFV…TIWKETRNMV (157 aa)). Position 167 is a phosphotyrosine (tyrosine 167).

As to quaternary structure, homodimer. Interacts with TLR4, TICAM1, IRF3 and IRF7 in response to LPS. Interacts with IL1R1, IL1RAP, IRAK2, IRAK3 and TRAF6. Interacts with protein kinase-inactive mutants of IRAK1 and IRAK4. Isoform 1 interacts with isoform 2; the interaction occurs in late endosomes and disrupts the interaction between isoform 1 and TICAM1. Interacts with MYD88; the interaction decreases after IL-18 stimulation in a time-dependent manner. Interacts with IL18R1 and IL18RAP. Interacts with TLR2. Interacts with RAB11FIP2. Post-translationally, phosphorylated by PRKCE in response to LPS. Phosphorylation is essential for its function. It is depleted from the membrane upon phosphorylation. Tyrosine phosphorylation is inhibited by phosphatase PTPN4. In terms of processing, isoform 1 is myristoylated. Required for membrane association which is critical for its ability to initiate efficient signaling. As to expression, expressed in spleen, prostate, testis, uterus, small intestine, colon, peripheral blood leukocytes, heart, placenta, lung, liver, skeletal muscle, and pancreas Isoform 2 is ubiquitously expressed (at lower levels than isoform 1).

The protein localises to the cytoplasm. It localises to the golgi apparatus. The protein resides in the cell membrane. Its subcellular location is the endoplasmic reticulum. It is found in the early endosome membrane. The protein localises to the late endosome membrane. It localises to the cell projection. The protein resides in the phagocytic cup. In terms of biological role, functions as a sorting adapter in different signaling pathways to facilitate downstream signaling leading to type I interferon induction. In TLR4 signaling, physically bridges TLR4 and TICAM1 and functionally transmits signal to TICAM1 in early endosomes after endocytosis of TLR4. In TLR2 signaling, physically bridges TLR2 and MYD88 and is required for the TLR2-dependent movement of MYD88 to endosomes following ligand engagement. Involved in IL-18 signaling and is proposed to function as a sorting adapter for MYD88 in IL-18 signaling during adaptive immune response. Forms a complex with RAB11FIP2 that is recruited to the phagosomes to promote the activation of the actin-regulatory GTPases RAC1 and CDC42 and subsequent phagocytosis of Gram-negative bacteria. Functionally, proposed to inhibit LPS-TLR4 signaling at the late endosome by interaction with isoform 1 thereby disrupting the association of isoform 1 with TICAM1. May be involved in TLR4 degradation in late endosomes. This chain is TIR domain-containing adapter molecule 2 (TICAM2), found in Homo sapiens (Human).